We begin with the raw amino-acid sequence, 231 residues long: NADH-ubiquinone oxidoreductase chain 4 (231 aa).

7 helical membrane passes run proline 1–isoleucine 21, methionine 34–leucine 54, isoleucine 63–glycine 85, alanine 89–tyrosine 111, isoleucine 128–proline 148, threonine 169–leucine 189, and leucine 211–isoleucine 231.

It belongs to the complex I subunit 4 family.

It is found in the mitochondrion membrane. It carries out the reaction a ubiquinone + NADH + 5 H(+)(in) = a ubiquinol + NAD(+) + 4 H(+)(out). Its function is as follows. Core subunit of the mitochondrial membrane respiratory chain NADH dehydrogenase (Complex I) that is believed to belong to the minimal assembly required for catalysis. Complex I functions in the transfer of electrons from NADH to the respiratory chain. The immediate electron acceptor for the enzyme is believed to be ubiquinone. The polypeptide is NADH-ubiquinone oxidoreductase chain 4 (MT-ND4) (Cerrophidion godmani (Porthidium godmani)).